The sequence spans 174 residues: Small ribosomal subunit protein uS5 (174 aa).

One can recognise an S5 DRBM domain in the interval 19–82; sequence LREKMVAINR…DEARRKLKKI (64 aa).

The protein belongs to the universal ribosomal protein uS5 family. Part of the 30S ribosomal subunit. Contacts proteins S4 and S8.

Its function is as follows. With S4 and S12 plays an important role in translational accuracy. Functionally, located at the back of the 30S subunit body where it stabilizes the conformation of the head with respect to the body. This chain is Small ribosomal subunit protein uS5, found in Aromatoleum aromaticum (strain DSM 19018 / LMG 30748 / EbN1) (Azoarcus sp. (strain EbN1)).